The following is a 296-amino-acid chain: Urease accessory protein UreD (296 aa).

This sequence belongs to the UreD family. In terms of assembly, ureD, UreF and UreG form a complex that acts as a GTP-hydrolysis-dependent molecular chaperone, activating the urease apoprotein by helping to assemble the nickel containing metallocenter of UreC. The UreE protein probably delivers the nickel.

It is found in the cytoplasm. In terms of biological role, required for maturation of urease via the functional incorporation of the urease nickel metallocenter. The sequence is that of Urease accessory protein UreD from Methylibium petroleiphilum (strain ATCC BAA-1232 / LMG 22953 / PM1).